Here is a 197-residue protein sequence, read N- to C-terminus: Chalcone--flavanone isomerase 2 (197 aa).

Thr23, Asn88, and Thr165 together coordinate substrate.

The protein belongs to the chalcone isomerase family.

The enzyme catalyses a chalcone = a flavanone.. It participates in secondary metabolite biosynthesis; flavonoid biosynthesis. Functionally, catalyzes the intramolecular cyclization of bicyclic chalcones into tricyclic (S)-flavanones. Responsible for the isomerization of 4,2',4',6'-tetrahydroxychalcone (also termed chalcone) into naringenin. This is Chalcone--flavanone isomerase 2 (CHI2) from Medicago sativa (Alfalfa).